A 464-amino-acid chain; its full sequence is ESX-1 secretion system protein EccE1 (464 aa).

Transmembrane regions (helical) follow at residues 11 to 31 (FTTG…AICM) and 34 to 54 (DLLW…VLTI).

The protein belongs to the EccE family. Part of the ESX-1 / type VII secretion system (T7SS), which is composed of cytosolic and membrane components. The ESX-1 membrane complex is composed of EccB1, EccCa1, EccCb1, EccD1 and EccE1.

It localises to the cell inner membrane. Functionally, part of the ESX-1 / type VII specialized secretion system (T7SS), which exports several proteins including EsxA and EsxB. Plays a role in DNA conjugation, in at least a donor strain. This is ESX-1 secretion system protein EccE1 from Mycolicibacterium smegmatis (strain ATCC 700084 / mc(2)155) (Mycobacterium smegmatis).